Reading from the N-terminus, the 737-residue chain is Catalase-peroxidase (737 aa).

Residues 1 to 23 (MLKKILPVLITLAIVHNTPTAWA) form the signal peptide. The segment at residues 102–223 (WHGAGTYRIY…LAATQMGLIY (122 aa)) is a cross-link (tryptophyl-tyrosyl-methioninium (Trp-Tyr) (with M-249)). Histidine 103 acts as the Proton acceptor in catalysis. Positions 223-249 (YVNPEGPNGKPDPVAAAKDIREAFARM) form a cross-link, tryptophyl-tyrosyl-methioninium (Tyr-Met) (with W-102). Histidine 264 lines the heme b pocket.

Belongs to the peroxidase family. Peroxidase/catalase subfamily. As to quaternary structure, homodimer or homotetramer. Requires heme b as cofactor. Formation of the three residue Trp-Tyr-Met cross-link is important for the catalase, but not the peroxidase activity of the enzyme.

The catalysed reaction is H2O2 + AH2 = A + 2 H2O. It carries out the reaction 2 H2O2 = O2 + 2 H2O. In terms of biological role, bifunctional enzyme with both catalase and broad-spectrum peroxidase activity. This is Catalase-peroxidase from Yersinia pseudotuberculosis serotype O:3 (strain YPIII).